Here is a 266-residue protein sequence, read N- to C-terminus: 3-methyl-2-oxobutanoate hydroxymethyltransferase (266 aa).

Asp43 and Asp82 together coordinate Mg(2+). 3-methyl-2-oxobutanoate-binding positions include 43 to 44 (DS), Asp82, and Lys110. Glu112 is a Mg(2+) binding site. Glu179 acts as the Proton acceptor in catalysis.

This sequence belongs to the PanB family. Homodecamer; pentamer of dimers. The cofactor is Mg(2+).

It is found in the cytoplasm. The catalysed reaction is 3-methyl-2-oxobutanoate + (6R)-5,10-methylene-5,6,7,8-tetrahydrofolate + H2O = 2-dehydropantoate + (6S)-5,6,7,8-tetrahydrofolate. It participates in cofactor biosynthesis; (R)-pantothenate biosynthesis; (R)-pantoate from 3-methyl-2-oxobutanoate: step 1/2. Its function is as follows. Catalyzes the reversible reaction in which hydroxymethyl group from 5,10-methylenetetrahydrofolate is transferred onto alpha-ketoisovalerate to form ketopantoate. This chain is 3-methyl-2-oxobutanoate hydroxymethyltransferase, found in Psychrobacter cryohalolentis (strain ATCC BAA-1226 / DSM 17306 / VKM B-2378 / K5).